The following is a 268-amino-acid chain: Tryptophan synthase alpha chain (268 aa).

Active-site proton acceptor residues include E49 and D60.

This sequence belongs to the TrpA family. Tetramer of two alpha and two beta chains.

The enzyme catalyses (1S,2R)-1-C-(indol-3-yl)glycerol 3-phosphate + L-serine = D-glyceraldehyde 3-phosphate + L-tryptophan + H2O. The protein operates within amino-acid biosynthesis; L-tryptophan biosynthesis; L-tryptophan from chorismate: step 5/5. Its function is as follows. The alpha subunit is responsible for the aldol cleavage of indoleglycerol phosphate to indole and glyceraldehyde 3-phosphate. This chain is Tryptophan synthase alpha chain, found in Pseudomonas paraeruginosa (strain DSM 24068 / PA7) (Pseudomonas aeruginosa (strain PA7)).